The sequence spans 27 residues: Conotoxin flf14b (27 aa).

2 cysteine pairs are disulfide-bonded: C6–C26 and C10–C22.

Expressed by the venom duct.

It is found in the secreted. In Conus anabathrum floridanus (Florida cone), this protein is Conotoxin flf14b.